The chain runs to 1017 residues: Probable beta-galactosidase B (1017 aa).

A signal peptide spans Met1–Ala20. The N-linked (GlcNAc...) asparagine glycan is linked to Asn23. Substrate is bound at residue Tyr90. Asn100 carries an N-linked (GlcNAc...) asparagine glycan. Residues Asn135, Ala136, and Glu137 each contribute to the substrate site. Asn158 carries an N-linked (GlcNAc...) asparagine glycan. Residue Asn195 participates in substrate binding. The active-site Proton donor is the Glu196. Asn211 carries N-linked (GlcNAc...) asparagine glycosylation. Tyr265 is a substrate binding site. Residues Cys271 and Cys324 are joined by a disulfide bond. The Nucleophile role is filled by Glu308. Tyr373 provides a ligand contact to substrate. Asn411, Asn417, Asn456, Asn628, Asn681, Asn737, Asn770, Asn777, Asn785, Asn828, and Asn829 each carry an N-linked (GlcNAc...) asparagine glycan.

The protein belongs to the glycosyl hydrolase 35 family.

The protein resides in the secreted. The catalysed reaction is Hydrolysis of terminal non-reducing beta-D-galactose residues in beta-D-galactosides.. Cleaves beta-linked terminal galactosyl residues from gangliosides, glycoproteins, and glycosaminoglycans. This is Probable beta-galactosidase B (lacB) from Aspergillus niger (strain ATCC MYA-4892 / CBS 513.88 / FGSC A1513).